The chain runs to 664 residues: 26S rRNA (cytosine-C(5))-methyltransferase nsun-1 (664 aa).

A disordered region spans residues 1–105 (MAIVKKKKVS…DDSDAGDHLP (105 aa)). Basic residues predominate over residues 38–52 (PKKKKLVKKVKKSAK). A compositionally biased stretch (basic and acidic residues) spans 53–68 (KAHEEEPIEQVEKLQL). Residues 84–99 (SDDEDLRDDYSDDDSD) show a composition bias toward acidic residues. Residues 313–319 (CSAPGGK), D337, and D382 contribute to the S-adenosyl-L-methionine site. C439 serves as the catalytic Nucleophile. A disordered region spans residues 513 to 664 (KMSKQGVMEK…RRKKMLAKQQ (152 aa)). Residues 519–528 (VMEKEKEKAA) show a composition bias toward basic and acidic residues. Residues 541 to 550 (EASESSDDEE) show a composition bias toward acidic residues. The span at 563-572 (KPAKKQQQKK) shows a compositional bias: basic residues. Residues 606–618 (KAAEKQAAVKEDD) show a composition bias toward basic and acidic residues. Basic residues-rich tracts occupy residues 627–644 (KRAKKPTQFKSKVPKRAA) and 652–664 (VKNRRKKMLAKQQ).

This sequence belongs to the class I-like SAM-binding methyltransferase superfamily. RsmB/NOP family.

The protein localises to the nucleus. The protein resides in the nucleolus. It carries out the reaction a cytidine in 26S rRNA + S-adenosyl-L-methionine = a 5-methylcytidine in 26S rRNA + S-adenosyl-L-homocysteine + H(+). Methyltransferase which methylates the carbon-5 position of cytosine 2982 to 5-methylcytosine (m5C2982) in 26S rRNA. May play a role in the translation of leucine and proline codons. May be required for the translation of specific mRNAs such as mRNAs involved in gonad development, collagen production and cuticle integrity. Plays a role in ensuring the correct localization of the germline-specific protein gld-1 during development. Not required for pre-rRNA processing, the production of mature 5S, 5.8S, 18S or 26S rRNAs or global translation. Plays a role in positively regulating fertility. In Caenorhabditis elegans, this protein is 26S rRNA (cytosine-C(5))-methyltransferase nsun-1.